The primary structure comprises 1662 residues: MYTNIPQQQQNIPQQQQQNIPQQQNVQNIQQPLPHTNIQQQNIQQQQQQYQLQFQKQQQQQQQQQQQQQQQQQQQQQQQQQQQQQQQQQQQQLQQQRPQTPQQNAQQQSQQSQQSQQQQASLGQGQQGSGPNTPPQSQPETIESIFKQLDLNSTGQQAKDILEQCKLKIHSLESQQLIAQAKYKLFSLAANYQSTVFQHIKMVSTTTTPTSTPTTSTTNTPQNSNTSSSSSTGTSSSTIGSSSSSTTTSTTNNENLGLPISKEIYQQKIQLWISIITFLRENLQYFGKWRESIYISIQNITQSTLLPTLIQKEFFTELFILLKSIFSFVNIEFPHYIALKEVKLSNTHQCLEYQNLIEPYYCRAAKLSSLLSLSSLSSSARIVGSSILLNQDAMIGYTNQLTESPPFFTSNRLLNNKYSTIVHHLLSQSASIEPIKELLFPQVQSNTLKSKIISIITEATISKTMQLLNKYPNQIIENQIENNSWKEWLLFSEQFYFLCENGLVDLEQFIVTLSEKRMNNGDPIKDNMVVLLISKTIIIQDVKTLFKQHLQNVNSNHYGHLIPLVLSFVNNDSNYPIISQNISLYFFLMRINTNTENPEIIAHIKKLLDNFNFQFTLFQQYRNWWESEKVKQKPEFFTTIQDITYFSIICNVIPTEGEMELIRFQSNGSDQSIQFPGVGGIGTVVTGKIKPVSNLILLNLSLRCRRKLIQESVLLLLDKEVPISPGFLEDYCRTVHYTPGPVSPFLFSYFKKFHRLAPIHAVIESVSHRLLKVLKSNKELAVLLRALQDIQTQKPIQNIQLSRSIDYLLLKASISLPVDLISAKEIWKSLDLGLFNNRRLITSIARLIKLKGIQDFNRISDVPVFIENCFKSNPYCFSKSTLEFFPDILKNEFKKNSENLSLNPNQFTNLTLMKPPTLQKVQLENQQRFQLFSVGGKLQILQKQALVQQYLTDNNSNLLLCQVFIYMLENKIKMDVMGPLIQQMFFKQIIGNQQPQQQQQPQQPPPLAISNQQLNRITSVFIDFIFDEVYVNHPLKQENLHQHVSEFLCQSIFTYKILTLNSVLLALLDRDDHPSMPTILDTFLFSSAEIQNRLQFFSTYPSDFFISQSFRNDDNYFIKNCEFNNRFNDLIPTVIDPNTLIEQSTQDTILPIYYSNSISRLMPIVEIIISKSIELNNGDLFEKTINHFNIPYHYYQDEKETTIKDTLIYYYDSQLFKLNPELKLLFLKLLNQSDIDNRFSNIFNQFLKSSRIEDITMVGSTAYFNDLISPLAEMMDLTNQNVFDTFSFKTENTFSSIDISNPLELKLNNIILEILLLPLDSNWIANGLVSLLNYSNRNKNFSDRKIDPPSSSMVLALSIIFSILPTQIHNSFIPIVTQNLSNELNFSKFKSPIMKNQYNFGNYTTNVEEKMTEPIEWYIYFIQFYYLYCPLERLLSLNDLVTNIRPLIKNVYQYYVLLTIVSPVLLRFGTQTNHLIQITREMLQILTDSYLSSYIENTLQDLESCWIGNTNDDDDIMDTTNFNLFGKRIGYDDDDDDEDDDYYDEDDEDEDDDNEDDQQDENDRMDFSQDTNNIFNRSMGDHDHLMMMSNSENLNDPWSDKNEFFRKQKSIFLKIDSQLIDTIIDWIYHIKMIFPFQPFRDELLRIVKEFKPNFLSKFNQLN.

Disordered regions lie at residues 1 to 24, 95 to 139, 206 to 252, and 1530 to 1572; these read MYTN…PQQQ, QQRP…QSQP, TTTP…STTN, and GYDD…QDTN. The stretch at 39–122 forms a coiled coil; sequence QQQNIQQQQQ…QQSQQQQASL (84 aa). Positions 95–124 are enriched in low complexity; that stretch reads QQRPQTPQQNAQQQSQQSQQSQQQQASLGQ. The segment covering 1532–1560 has biased composition (acidic residues); sequence DDDDDDEDDDYYDEDDEDEDDDNEDDQQD.

This sequence belongs to the Mediator complex subunit 23 family. Component of the Mediator complex.

The protein localises to the nucleus. Component of the Mediator complex, a coactivator involved in the regulated transcription of nearly all RNA polymerase II-dependent genes. Mediator functions as a bridge to convey information from gene-specific regulatory proteins to the basal RNA polymerase II transcription machinery. Mediator is recruited to promoters by direct interactions with regulatory proteins and serves as a scaffold for the assembly of a functional preinitiation complex with RNA polymerase II and the general transcription factors. This is Putative mediator of RNA polymerase II transcription subunit 23 (med23) from Dictyostelium discoideum (Social amoeba).